The following is a 381-amino-acid chain: Glycerate kinase (381 aa).

Belongs to the glycerate kinase type-1 family.

It catalyses the reaction (R)-glycerate + ATP = (2R)-3-phosphoglycerate + ADP + H(+). This is Glycerate kinase (glxK) from Bacillus cereus (strain ATCC 10987 / NRS 248).